A 221-amino-acid polypeptide reads, in one-letter code: Probable septum site-determining protein MinC (221 aa).

It belongs to the MinC family. In terms of assembly, interacts with MinD and FtsZ.

Functionally, cell division inhibitor that blocks the formation of polar Z ring septums. Rapidly oscillates between the poles of the cell to destabilize FtsZ filaments that have formed before they mature into polar Z rings. Prevents FtsZ polymerization. In Shewanella sp. (strain ANA-3), this protein is Probable septum site-determining protein MinC.